Here is a 432-residue protein sequence, read N- to C-terminus: Tol-Pal system protein TolB (432 aa).

Residues 1-21 (MKHVRIFATLLALLVISVTPA) form the signal peptide.

This sequence belongs to the TolB family. As to quaternary structure, the Tol-Pal system is composed of five core proteins: the inner membrane proteins TolA, TolQ and TolR, the periplasmic protein TolB and the outer membrane protein Pal. They form a network linking the inner and outer membranes and the peptidoglycan layer.

The protein localises to the periplasm. Its function is as follows. Part of the Tol-Pal system, which plays a role in outer membrane invagination during cell division and is important for maintaining outer membrane integrity. The sequence is that of Tol-Pal system protein TolB from Geobacter sulfurreducens (strain ATCC 51573 / DSM 12127 / PCA).